Here is a 186-residue protein sequence, read N- to C-terminus: uncharacterized protein (186 aa).

Transmembrane regions (helical) follow at residues 5 to 25, 39 to 59, 62 to 82, and 122 to 142; these read LIACLIINNLTLIHFVGFEDI, IITITSLLIYSISFYLYKLFA, NLLFLVPIFYVILIYVLILLF, and GFFEGLEILILSALGILIALM.

Its subcellular location is the cell membrane. This is an uncharacterized protein from Borreliella burgdorferi (strain ATCC 35210 / DSM 4680 / CIP 102532 / B31) (Borrelia burgdorferi).